The following is a 151-amino-acid chain: MEKTTLPNLETLDKQWYVIDAAGQRLGRLASEIAMILRGKNKPTYTPHLDTGDFVIVINAEKVIVTGKKSQQKVYHRHSGRPGGMKVETFEKLQARLPERIVEKAVKGMLPKNSLGRQLFTKLKVYSGSNHPHQAQKPETLTINTIPGGNN.

Residues 129 to 151 (SNHPHQAQKPETLTINTIPGGNN) form a disordered region.

It belongs to the universal ribosomal protein uL13 family. As to quaternary structure, part of the 50S ribosomal subunit.

This protein is one of the early assembly proteins of the 50S ribosomal subunit, although it is not seen to bind rRNA by itself. It is important during the early stages of 50S assembly. The protein is Large ribosomal subunit protein uL13 of Gloeothece citriformis (strain PCC 7424) (Cyanothece sp. (strain PCC 7424)).